The chain runs to 288 residues: Aminoglycoside N(3)-acetyltransferase VII (288 aa).

This sequence belongs to the antibiotic N-acetyltransferase family.

The catalysed reaction is a 2-deoxystreptamine antibiotic + acetyl-CoA = an N(3)-acetyl-2-deoxystreptamine antibiotic + CoA + H(+). Resistance to paromomycin. This chain is Aminoglycoside N(3)-acetyltransferase VII (aacC7), found in Streptomyces paromomycinus (Streptomyces rimosus subsp. paromomycinus).